A 477-amino-acid chain; its full sequence is Aspartyl/glutamyl-tRNA(Asn/Gln) amidotransferase subunit B (477 aa).

This sequence belongs to the GatB/GatE family. GatB subfamily. Heterotrimer of A, B and C subunits.

It carries out the reaction L-glutamyl-tRNA(Gln) + L-glutamine + ATP + H2O = L-glutaminyl-tRNA(Gln) + L-glutamate + ADP + phosphate + H(+). It catalyses the reaction L-aspartyl-tRNA(Asn) + L-glutamine + ATP + H2O = L-asparaginyl-tRNA(Asn) + L-glutamate + ADP + phosphate + 2 H(+). Its function is as follows. Allows the formation of correctly charged Asn-tRNA(Asn) or Gln-tRNA(Gln) through the transamidation of misacylated Asp-tRNA(Asn) or Glu-tRNA(Gln) in organisms which lack either or both of asparaginyl-tRNA or glutaminyl-tRNA synthetases. The reaction takes place in the presence of glutamine and ATP through an activated phospho-Asp-tRNA(Asn) or phospho-Glu-tRNA(Gln). This is Aspartyl/glutamyl-tRNA(Asn/Gln) amidotransferase subunit B from Coxiella burnetii (strain RSA 493 / Nine Mile phase I).